The following is a 217-amino-acid chain: Small ribosomal subunit protein uS3 (217 aa).

The KH type-2 domain maps to 38–106 (VRKYIETALK…RVHINIIEIK (69 aa)).

The protein belongs to the universal ribosomal protein uS3 family. In terms of assembly, part of the 30S ribosomal subunit. Forms a tight complex with proteins S10 and S14.

Functionally, binds the lower part of the 30S subunit head. Binds mRNA in the 70S ribosome, positioning it for translation. This Lysinibacillus sphaericus (strain C3-41) protein is Small ribosomal subunit protein uS3.